The sequence spans 343 residues: D-erythrose-4-phosphate dehydrogenase (343 aa).

12–13 lines the NAD(+) pocket; that stretch reads RI. Residues 154-156, R200, 213-214, and R236 each bind substrate; these read SCT and TK. Residue C155 is the Nucleophile of the active site. Residue N318 participates in NAD(+) binding.

Belongs to the glyceraldehyde-3-phosphate dehydrogenase family. Epd subfamily. Homotetramer.

It localises to the cytoplasm. It catalyses the reaction D-erythrose 4-phosphate + NAD(+) + H2O = 4-phospho-D-erythronate + NADH + 2 H(+). It functions in the pathway cofactor biosynthesis; pyridoxine 5'-phosphate biosynthesis; pyridoxine 5'-phosphate from D-erythrose 4-phosphate: step 1/5. Functionally, catalyzes the NAD-dependent conversion of D-erythrose 4-phosphate to 4-phosphoerythronate. This Pseudoalteromonas translucida (strain TAC 125) protein is D-erythrose-4-phosphate dehydrogenase.